Here is a 349-residue protein sequence, read N- to C-terminus: Putative F-box/kelch-repeat protein At4g02310 (349 aa).

Residues 11-58 (SLFSLLPNDIVLNILARVPRWYHPILSCVSKNLRFLVSSSELKITRSL) form the F-box domain. A Kelch repeat occupies 154–204 (KIYVFGGIDDMNKRYYEGIHAQVFDLKTQTWHVGPNLSVKLACLNRSVVTP).

The chain is Putative F-box/kelch-repeat protein At4g02310 from Arabidopsis thaliana (Mouse-ear cress).